We begin with the raw amino-acid sequence, 368 residues long: C-glycoside deglycosidase alpha subunit (368 aa).

Residue glutamate 145 participates in a divalent metal cation binding. Histidine 147 (proton acceptor) is an active-site residue. A divalent metal cation-binding residues include aspartate 177, histidine 275, and glutamate 311.

It belongs to the C-glycoside deglycosidase alpha subunit family. In terms of assembly, heterodimer composed of an alpha subunit (CarB) and a beta subunit (CarC). It depends on a divalent metal cation as a cofactor.

The enzyme catalyses 3''-dehydroisovitexin = 1,5-anhydro-D-erythro-hex-1-en-3-ulose + apigenin. It carries out the reaction 3''-dehydroisoorientin = 1,5-anhydro-D-erythro-hex-1-en-3-ulose + luteolin. Functionally, carbon-carbon bond-cleaving enzyme which participates in the metabolism of C-glycosides. Acts on the C6-glycosylated compounds 3''-dehydroisovitexin (3''-oxo-isovitexin) and 3''-dehydroisoorientin (3''-oxo-homoorientin). Shows weak activity with 3'-dehydromangiferin (3'-oxo-mangiferin). The chain is C-glycoside deglycosidase alpha subunit from Microbacterium trichothecenolyticum (Aureobacterium trichothecenolyticum).